Reading from the N-terminus, the 855-residue chain is MKPRPGVFVDRKLKQRVIQYLSSNRCGKYVDTGILASDLQRLYSVDYGRRKRNAFRIQVEKVFSIISSEKELKNLKELEDGHLAKRARQDEEDEYTESYSDDDSNMEDYPDPQSANPMNSSLLSLYRRGNSESVSTTPKWGQREATTSTPLLTSKTGSVPLKTPARESEGGWFIDKTPGGKKESLPLDLSDDQSNSKKQDSEIQILKDSSLLESDKKRKGRAKGKGNKRKTENLQEVDGEIEALLQKKAKARSTELQISNVKFEDVGGNDATLKEVCKMLIHMRHPEVYQHLGVVPPRGVLLHGPPGCGKTLLAHAIAGELDLPILKVAAPEIVSGVSGESEQKLRELFDQAVSNAPCIVFIDEIDAITPKREVASKDMERRIVAQLLTCMDDLNNVAATARVLVIGATNRPDSLDPALRRAGRFDREVCLGIPDEAARERILQTLCRKLRLPETFNFCHLAHLTPGFVGADLMALCREAAMCAVNRVLMKQQAQQKKKPEIEGLPSEGDQEERLGAEPTSETQDELQRLLGLLRDQDPLSEEQMQGLCIELNDFIVALAEVQPSAKREGFVTVPNVTWADIGALEDIRDELIMAILAPVRNPDQFRTLGLGTPAGILLAGPPGCGKTLLAKAVANESGLNFISVKGPELLNMYVGESERAVRQVFQRAKNSAPCVIFFDEVDALCPRRSDRETGASVRVVNQLLTEMDGLETRQQVFILAATNRPDIIDPAILRPGRLDKTLFVGLPPPADRVAILKTITKNGTKPPLDEDVNLETIANDLRCNCYTGADLTALVREASLCALRQEITAQKNGVGAGELKVSHKHFEDAFKKVKPSISIKDQVMYEALQRSLSQ.

Residues 1 to 219 (MKPRPGVFVD…SLLESDKKRK (219 aa)) are interaction with RPL5. Residues 49 to 52 (RRKR) carry the Nucleolar localization signal motif. Position 70 is an N6-acetyllysine (Lys70). The tract at residues 83-234 (LAKRARQDEE…KGNKRKTENL (152 aa)) is disordered. The Nuclear localization signal motif lies at 85–88 (KRAR). Residues 90–110 (DEEDEYTESYSDDDSNMEDYP) show a composition bias toward acidic residues. Composition is skewed to polar residues over residues 113 to 123 (QSANPMNSSLL) and 131 to 157 (SESV…SKTG). Position 133 is a phosphoserine (Ser133). A Phosphothreonine modification is found at Thr137. Residue Lys155 is modified to N6-acetyllysine. Position 190 is a phosphoserine (Ser190). Lys207 is covalently cross-linked (Glycyl lysine isopeptide (Lys-Gly) (interchain with G-Cter in SUMO2)). Residues Ser210 and Ser214 each carry the phosphoserine modification. Residues 217–228 (KRKGRAKGKGNK) show a composition bias toward basic residues. A Nuclear localization signal motif is present at residues 217–231 (KRKGRAKGKGNKRKT). Residues 266–473 (VGGNDATLKE…LTPGFVGADL (208 aa)) form an interaction with WDR74 region. 304–311 (GPPGCGKT) lines the ATP pocket. The interval 496 to 523 (QKKKPEIEGLPSEGDQEERLGAEPTSET) is disordered. An ATP-binding site is contributed by 621-628 (GPPGCGKT).

The protein belongs to the AAA ATPase family. As to quaternary structure, interacts with NCL/nucleolin. Isoform 1 and isoform 2 interact with TERT and isoform 1 exhibits a higher binding affinity for TERT compared to isoform 2. Isoform 1 interacts with MTREX in an ATP-dependent manner; the interaction is required to associate NVL with nuclear RNA exosome. Isoform 1 interacts with RPL5 in an ATP-dependent manner. Interacts with WDR74 (through WDR repeats); the interaction is independent of RNA or pre-60S ribosome particles.

The protein localises to the nucleus. Its subcellular location is the nucleolus. It localises to the nucleoplasm. Functionally, participates in the assembly of the telomerase holoenzyme and effecting of telomerase activity via its interaction with TERT. Involved in both early and late stages of the pre-rRNA processing pathways. Spatiotemporally regulates 60S ribosomal subunit biogenesis in the nucleolus. Catalyzes the release of specific assembly factors, such as WDR74, from pre-60S ribosomal particles through the ATPase activity. The protein is Nuclear valosin-containing protein-like of Mus musculus (Mouse).